Consider the following 426-residue polypeptide: Serine--tRNA ligase (426 aa).

233-235 contributes to the L-serine binding site; it reads TSE. An ATP-binding site is contributed by 264–266; that stretch reads RAE. Glu-287 lines the L-serine pocket. ATP is bound at residue 351–354; that stretch reads EISS. Ser-387 contacts L-serine.

Belongs to the class-II aminoacyl-tRNA synthetase family. Type-1 seryl-tRNA synthetase subfamily. In terms of assembly, homodimer. The tRNA molecule binds across the dimer.

It localises to the cytoplasm. The catalysed reaction is tRNA(Ser) + L-serine + ATP = L-seryl-tRNA(Ser) + AMP + diphosphate + H(+). The enzyme catalyses tRNA(Sec) + L-serine + ATP = L-seryl-tRNA(Sec) + AMP + diphosphate + H(+). The protein operates within aminoacyl-tRNA biosynthesis; selenocysteinyl-tRNA(Sec) biosynthesis; L-seryl-tRNA(Sec) from L-serine and tRNA(Sec): step 1/1. Its function is as follows. Catalyzes the attachment of serine to tRNA(Ser). Is also able to aminoacylate tRNA(Sec) with serine, to form the misacylated tRNA L-seryl-tRNA(Sec), which will be further converted into selenocysteinyl-tRNA(Sec). The polypeptide is Serine--tRNA ligase (Xanthomonas campestris pv. campestris (strain 8004)).